The following is a 560-amino-acid chain: Platelet glycoprotein V (560 aa).

Positions Met1–Ala16 are cleaved as a signal peptide. The region spanning Gln17–Thr50 is the LRRNT domain. Topologically, residues Gln17–Gly523 are extracellular. Asn51 is a glycosylation site (N-linked (GlcNAc...) asparagine). LRR repeat units lie at residues Val75 to Asp96, Lys99 to Lys120, Leu123 to Lys144, Asn147 to Asn168, Asn171 to Gln193, Lys195 to Ser216, Ala219 to Arg240, Asn243 to His264, Asn267 to Glu288, Gly291 to Asn312, Glu340 to Gly361, Lys364 to Asn385, and Ser388 to Ala409. Residue Asn181 is glycosylated (N-linked (GlcNAc...) (complex) asparagine). An N-linked (GlcNAc...) (complex) asparagine glycan is attached at Asn243. N-linked (GlcNAc...) asparagine glycosylation is found at Asn267, Asn298, and Asn312. Asn385 carries N-linked (GlcNAc...) asparagine glycosylation. In terms of domain architecture, LRRCT spans Asn421–Gly474. Positions Asp469–Pro498 are disordered. The N-linked (GlcNAc...) asparagine glycan is linked to Asn499. A helical membrane pass occupies residues Phe524–Ile544. Residues Lys545–Gly560 lie on the Cytoplasmic side of the membrane.

In terms of processing, the N-terminus is blocked. Platelets and megakaryocytes.

It is found in the membrane. Functionally, the GPIb-V-IX complex functions as the vWF receptor and mediates vWF-dependent platelet adhesion to blood vessels. The adhesion of platelets to injured vascular surfaces in the arterial circulation is a critical initiating event in hemostasis. This Homo sapiens (Human) protein is Platelet glycoprotein V (GP5).